We begin with the raw amino-acid sequence, 471 residues long: V-type ATP synthase beta chain (471 aa).

The protein belongs to the ATPase alpha/beta chains family.

Produces ATP from ADP in the presence of a proton gradient across the membrane. The V-type beta chain is a regulatory subunit. This is V-type ATP synthase beta chain from Deinococcus deserti (strain DSM 17065 / CIP 109153 / LMG 22923 / VCD115).